The primary structure comprises 78 residues: Cytochrome c oxidase subunit 6b-3 (78 aa).

The 44-residue stretch at 22–65 folds into the CHCH domain; sequence TRHCFTRYIEFHRCTTAKGEDANECERFAKYYRALCPGEWVDKW. The Cx9C motif motif lies at 25 to 35; it reads CFTRYIEFHRC. 2 disulfide bridges follow: Cys25-Cys57 and Cys35-Cys46. Residues 46–57 carry the Cx10C motif motif; the sequence is CERFAKYYRALC.

This sequence belongs to the cytochrome c oxidase subunit 6B (TC 3.D.4.8) family. As to expression, expressed in the whole plant.

The protein resides in the mitochondrion. This protein is one of the nuclear-coded polypeptide chains of cytochrome c oxidase, the terminal oxidase in mitochondrial electron transport. This protein may be one of the heme-binding subunits of the oxidase. In Arabidopsis thaliana (Mouse-ear cress), this protein is Cytochrome c oxidase subunit 6b-3 (COX6B-3).